Consider the following 185-residue polypeptide: Large ribosomal subunit protein uL5 (185 aa).

The protein belongs to the universal ribosomal protein uL5 family. In terms of assembly, part of the 50S ribosomal subunit; part of the 5S rRNA/L5/L18/L25 subcomplex. Contacts the 5S rRNA and the P site tRNA. Forms a bridge to the 30S subunit in the 70S ribosome.

In terms of biological role, this is one of the proteins that bind and probably mediate the attachment of the 5S RNA into the large ribosomal subunit, where it forms part of the central protuberance. In the 70S ribosome it contacts protein S13 of the 30S subunit (bridge B1b), connecting the 2 subunits; this bridge is implicated in subunit movement. Contacts the P site tRNA; the 5S rRNA and some of its associated proteins might help stabilize positioning of ribosome-bound tRNAs. This is Large ribosomal subunit protein uL5 from Brucella abortus (strain S19).